The primary structure comprises 186 residues: MAAEDPSVSGVSGRYATALFELARDEKSVDAVKADLDKFNALLDESADLKRLVRSPVFGADTQLKALNAVLDKAGIAGVAANVLRVLTTNRRLFAVADVIRAFNALVAKYKGEATADVTVAEPISDKNLDALKAALKTVTGKDVALNVKVDPAIIGGLVVKLGSRMIDSSLRTKLNSIKHAMKEAG.

This sequence belongs to the ATPase delta chain family. As to quaternary structure, F-type ATPases have 2 components, F(1) - the catalytic core - and F(0) - the membrane proton channel. F(1) has five subunits: alpha(3), beta(3), gamma(1), delta(1), epsilon(1). CF(0) has four main subunits: a(1), b(1), b'(1) and c(10-14). The alpha and beta chains form an alternating ring which encloses part of the gamma chain. F(1) is attached to F(0) by a central stalk formed by the gamma and epsilon chains, while a peripheral stalk is formed by the delta, b and b' chains.

It is found in the cell inner membrane. In terms of biological role, f(1)F(0) ATP synthase produces ATP from ADP in the presence of a proton or sodium gradient. F-type ATPases consist of two structural domains, F(1) containing the extramembraneous catalytic core and F(0) containing the membrane proton channel, linked together by a central stalk and a peripheral stalk. During catalysis, ATP synthesis in the catalytic domain of F(1) is coupled via a rotary mechanism of the central stalk subunits to proton translocation. This protein is part of the stalk that links CF(0) to CF(1). It either transmits conformational changes from CF(0) to CF(1) or is implicated in proton conduction. The protein is ATP synthase subunit delta of Bradyrhizobium sp. (strain ORS 278).